Here is a 335-residue protein sequence, read N- to C-terminus: DNA-directed RNA polymerase subunit alpha (335 aa).

An alpha N-terminal domain (alpha-NTD) region spans residues Met1–Glu233. An alpha C-terminal domain (alpha-CTD) region spans residues Lys264–Asn335.

Belongs to the RNA polymerase alpha chain family. As to quaternary structure, in plastids the minimal PEP RNA polymerase catalytic core is composed of four subunits: alpha, beta, beta', and beta''. When a (nuclear-encoded) sigma factor is associated with the core the holoenzyme is formed, which can initiate transcription.

The protein resides in the plastid. Its subcellular location is the chloroplast. The catalysed reaction is RNA(n) + a ribonucleoside 5'-triphosphate = RNA(n+1) + diphosphate. Its function is as follows. DNA-dependent RNA polymerase catalyzes the transcription of DNA into RNA using the four ribonucleoside triphosphates as substrates. The chain is DNA-directed RNA polymerase subunit alpha from Pinus thunbergii (Japanese black pine).